A 336-amino-acid polypeptide reads, in one-letter code: D-erythrose-4-phosphate dehydrogenase (336 aa).

Position 11–12 (11–12 (RI)) interacts with NAD(+). Substrate-binding positions include 153–155 (SCT), Arg-199, 212–213 (TR), and Arg-235. The active-site Nucleophile is the Cys-154. Asn-317 contributes to the NAD(+) binding site.

This sequence belongs to the glyceraldehyde-3-phosphate dehydrogenase family. Epd subfamily. As to quaternary structure, homotetramer.

The protein resides in the cytoplasm. It carries out the reaction D-erythrose 4-phosphate + NAD(+) + H2O = 4-phospho-D-erythronate + NADH + 2 H(+). It participates in cofactor biosynthesis; pyridoxine 5'-phosphate biosynthesis; pyridoxine 5'-phosphate from D-erythrose 4-phosphate: step 1/5. Its function is as follows. Catalyzes the NAD-dependent conversion of D-erythrose 4-phosphate to 4-phosphoerythronate. This is D-erythrose-4-phosphate dehydrogenase from Alteromonas mediterranea (strain DSM 17117 / CIP 110805 / LMG 28347 / Deep ecotype).